Consider the following 272-residue polypeptide: Homeobox protein Hox-D12 (272 aa).

The segment at residues Ser-204–Val-263 is a DNA-binding region (homeobox).

It belongs to the Abd-B homeobox family.

It is found in the nucleus. In terms of biological role, sequence-specific transcription factor which is part of a developmental regulatory system that provides cells with specific positional identities on the anterior-posterior axis. This chain is Homeobox protein Hox-D12 (HOXD12), found in Heterodontus francisci (Horn shark).